A 168-amino-acid polypeptide reads, in one-letter code: Transcription antitermination protein NusB (168 aa).

This sequence belongs to the NusB family.

Functionally, involved in transcription antitermination. Required for transcription of ribosomal RNA (rRNA) genes. Binds specifically to the boxA antiterminator sequence of the ribosomal RNA (rrn) operons. The chain is Transcription antitermination protein NusB from Prosthecochloris aestuarii (strain DSM 271 / SK 413).